Consider the following 397-residue polypeptide: Subtilisin-like protease 3 (397 aa).

Residues 1–19 (MGCIKVISVFLAAIAAVDA) form the signal peptide. Positions 20–116 (RAFFHNRGGS…VEHDRVVKLA (97 aa)) are excised as a propeptide. The Inhibitor I9 domain maps to 35 to 116 (SYIVVMKDGV…VEHDRVVKLA (82 aa)). Residues 126–397 (TWGLGRVSHR…NRLLYNGSGQ (272 aa)) form the Peptidase S8 domain. Active-site charge relay system residues include aspartate 158 and histidine 189. Residue asparagine 250 is glycosylated (N-linked (GlcNAc...) asparagine). Serine 344 acts as the Charge relay system in catalysis. An N-linked (GlcNAc...) asparagine glycan is attached at asparagine 393.

Belongs to the peptidase S8 family.

The protein resides in the secreted. In terms of biological role, secreted subtilisin-like serine protease with keratinolytic activity that contributes to pathogenicity. This Trichophyton equinum (Horse ringworm fungus) protein is Subtilisin-like protease 3 (SUB3).